The following is a 66-amino-acid chain: Beta-defensin 134 (66 aa).

The signal sequence occupies residues 1–19 (MKPLLVVFVFLFLWDPVLA). Intrachain disulfides connect Cys32-Cys58, Cys38-Cys52, and Cys42-Cys59.

The protein belongs to the beta-defensin family.

It is found in the secreted. Functionally, has antibacterial activity. The sequence is that of Beta-defensin 134 (DEFB134) from Homo sapiens (Human).